A 344-amino-acid chain; its full sequence is Anthranilate phosphoribosyltransferase (344 aa).

Residues glycine 80, 83 to 84 (GD), threonine 88, 90 to 93 (NIST), 108 to 116 (KHGNRSISS), and serine 120 each bind 5-phospho-alpha-D-ribose 1-diphosphate. Position 80 (glycine 80) interacts with anthranilate. Mg(2+) is bound at residue serine 92. Position 111 (asparagine 111) interacts with anthranilate. Arginine 166 is a binding site for anthranilate. Positions 229 and 230 each coordinate Mg(2+).

This sequence belongs to the anthranilate phosphoribosyltransferase family. Homodimer. It depends on Mg(2+) as a cofactor.

The enzyme catalyses N-(5-phospho-beta-D-ribosyl)anthranilate + diphosphate = 5-phospho-alpha-D-ribose 1-diphosphate + anthranilate. Its pathway is amino-acid biosynthesis; L-tryptophan biosynthesis; L-tryptophan from chorismate: step 2/5. Its function is as follows. Catalyzes the transfer of the phosphoribosyl group of 5-phosphorylribose-1-pyrophosphate (PRPP) to anthranilate to yield N-(5'-phosphoribosyl)-anthranilate (PRA). The chain is Anthranilate phosphoribosyltransferase from Chloroherpeton thalassium (strain ATCC 35110 / GB-78).